The following is a 273-amino-acid chain: Glutamate 5-kinase (273 aa).

Position 15 (K15) interacts with ATP. The substrate site is built by S55, D142, and N158. ATP-binding positions include 178 to 179 and 220 to 226; these read SD and TGGMLSK.

Belongs to the glutamate 5-kinase family.

It localises to the cytoplasm. The enzyme catalyses L-glutamate + ATP = L-glutamyl 5-phosphate + ADP. It participates in amino-acid biosynthesis; L-proline biosynthesis; L-glutamate 5-semialdehyde from L-glutamate: step 1/2. Its function is as follows. Catalyzes the transfer of a phosphate group to glutamate to form L-glutamate 5-phosphate. This chain is Glutamate 5-kinase, found in Streptococcus pyogenes serotype M6 (strain ATCC BAA-946 / MGAS10394).